Consider the following 118-residue polypeptide: Large ribosomal subunit protein uL18 (118 aa).

This sequence belongs to the universal ribosomal protein uL18 family. In terms of assembly, part of the 50S ribosomal subunit; part of the 5S rRNA/L5/L18/L25 subcomplex. Contacts the 5S and 23S rRNAs.

Its function is as follows. This is one of the proteins that bind and probably mediate the attachment of the 5S RNA into the large ribosomal subunit, where it forms part of the central protuberance. In Rickettsia peacockii (strain Rustic), this protein is Large ribosomal subunit protein uL18.